We begin with the raw amino-acid sequence, 120 residues long: U13-lycotoxin-Ls1d (120 aa).

The N-terminal stretch at 1 to 16 (MKILFVLISILYAVYC) is a signal peptide. Residues 17–54 (FSSEEDVDSAYLANELEPVEDINSEQYAALEPKEEQER) constitute a propeptide that is removed on maturation. Cystine bridges form between Cys56–Cys70, Cys63–Cys76, Cys69–Cys87, and Cys78–Cys85. Residues 56 to 95 (CADMGQDCKDDCDCCLNIATCNCRFGRYFCSCTFGDYQTC) form the Agouti domain.

It belongs to the neurotoxin 05 (agouti) family. In terms of processing, contains 6 disulfide bonds. As to expression, expressed by the venom gland.

It is found in the secreted. In Lycosa singoriensis (Wolf spider), this protein is U13-lycotoxin-Ls1d.